The following is a 98-amino-acid chain: Aspartyl/glutamyl-tRNA(Asn/Gln) amidotransferase subunit C (98 aa).

The interval 75 to 98 (AQALSGAPAQEQQRFKVPQILGED) is disordered.

This sequence belongs to the GatC family. Heterotrimer of A, B and C subunits.

It carries out the reaction L-glutamyl-tRNA(Gln) + L-glutamine + ATP + H2O = L-glutaminyl-tRNA(Gln) + L-glutamate + ADP + phosphate + H(+). It catalyses the reaction L-aspartyl-tRNA(Asn) + L-glutamine + ATP + H2O = L-asparaginyl-tRNA(Asn) + L-glutamate + ADP + phosphate + 2 H(+). Its function is as follows. Allows the formation of correctly charged Asn-tRNA(Asn) or Gln-tRNA(Gln) through the transamidation of misacylated Asp-tRNA(Asn) or Glu-tRNA(Gln) in organisms which lack either or both of asparaginyl-tRNA or glutaminyl-tRNA synthetases. The reaction takes place in the presence of glutamine and ATP through an activated phospho-Asp-tRNA(Asn) or phospho-Glu-tRNA(Gln). The sequence is that of Aspartyl/glutamyl-tRNA(Asn/Gln) amidotransferase subunit C from Streptomyces griseus subsp. griseus (strain JCM 4626 / CBS 651.72 / NBRC 13350 / KCC S-0626 / ISP 5235).